Here is a 222-residue protein sequence, read N- to C-terminus: Probable mitochondrial import inner membrane translocase subunit Tim17 3 (222 aa).

3 consecutive transmembrane segments (helical) span residues 16 to 36, 60 to 80, and 115 to 135; these read CGCA…LKGF, SIAG…CALV, and ALVG…VATI.

The protein belongs to the Tim17/Tim22/Tim23 family. Component of the TIM23 complex at least composed of Tim23, Tim17 (Tim17a1, Tim17a2 or Tim17b1) and a Tim50. The complex interacts with the Tim44 component of the PAM complex.

It is found in the mitochondrion inner membrane. In terms of biological role, essential component of the TIM23 complex, a complex that mediates the translocation of transit peptide-containing proteins across the mitochondrial inner membrane. This is Probable mitochondrial import inner membrane translocase subunit Tim17 3 (Tim17a1) from Drosophila melanogaster (Fruit fly).